Consider the following 372-residue polypeptide: MQKKSTISWSYDAWIVICTLSLLALGLLMVASASMVISDRQFGYPFHYFIRHLIYLSLGLTLAWVASRVPIKVWKTYSGYLFLVGFLLLILVLAPVIGKTVNGSRRWIQLGFISLQVSEVVKFVTILYLASFLQRYQSEVQKELKGFLKPMLLVGILSGLLLLEPDFGAAVVITMTCLALLFLAGVRLWPFCVLLVLVAGSLILLAILSPYRLQRLTSFLNPWAHQFGSGYQLTQSLIAFGRGGLFGVGLGNSVQKLFYLPEAHTDFLFAVLAEELGLIGEILLMGLFVLLIGRIILIGRRAENSNQLYSAYLAYGIALWLGLQVIINIGVTAGVLPTKGLTLPFISYGGSSLLMNCLAIGVILRIAYETEN.

Over 1 to 12 the chain is Cytoplasmic; the sequence is MQKKSTISWSYD. The chain crosses the membrane as a helical span at residues 13-33; that stretch reads AWIVICTLSLLALGLLMVASA. The Periplasmic segment spans residues 34-45; that stretch reads SMVISDRQFGYP. A helical transmembrane segment spans residues 46–66; that stretch reads FHYFIRHLIYLSLGLTLAWVA. Residues 67-77 are Cytoplasmic-facing; sequence SRVPIKVWKTY. The chain crosses the membrane as a helical span at residues 78–98; sequence SGYLFLVGFLLLILVLAPVIG. The Periplasmic portion of the chain corresponds to 99–109; that stretch reads KTVNGSRRWIQ. Residues 110-130 traverse the membrane as a helical segment; that stretch reads LGFISLQVSEVVKFVTILYLA. At 131–142 the chain is on the cytoplasmic side; that stretch reads SFLQRYQSEVQK. Residues 143–163 traverse the membrane as a helical segment; sequence ELKGFLKPMLLVGILSGLLLL. The Periplasmic segment spans residues 164–165; it reads EP. A helical transmembrane segment spans residues 166-186; sequence DFGAAVVITMTCLALLFLAGV. Position 187 (Arg-187) is a topological domain, cytoplasmic. The chain crosses the membrane as a helical span at residues 188–208; the sequence is LWPFCVLLVLVAGSLILLAIL. Residues 209 to 277 are Periplasmic-facing; sequence SPYRLQRLTS…LFAVLAEELG (69 aa). Residues 278 to 298 form a helical membrane-spanning segment; sequence LIGEILLMGLFVLLIGRIILI. Over 299–315 the chain is Cytoplasmic; that stretch reads GRRAENSNQLYSAYLAY. A helical membrane pass occupies residues 316-336; the sequence is GIALWLGLQVIINIGVTAGVL. The Periplasmic portion of the chain corresponds to 337-342; sequence PTKGLT. The chain crosses the membrane as a helical span at residues 343–363; that stretch reads LPFISYGGSSLLMNCLAIGVI. Residues 364-372 lie on the Cytoplasmic side of the membrane; it reads LRIAYETEN.

The protein belongs to the SEDS family. FtsW subfamily.

It is found in the cell inner membrane. The enzyme catalyses [GlcNAc-(1-&gt;4)-Mur2Ac(oyl-L-Ala-gamma-D-Glu-L-Lys-D-Ala-D-Ala)](n)-di-trans,octa-cis-undecaprenyl diphosphate + beta-D-GlcNAc-(1-&gt;4)-Mur2Ac(oyl-L-Ala-gamma-D-Glu-L-Lys-D-Ala-D-Ala)-di-trans,octa-cis-undecaprenyl diphosphate = [GlcNAc-(1-&gt;4)-Mur2Ac(oyl-L-Ala-gamma-D-Glu-L-Lys-D-Ala-D-Ala)](n+1)-di-trans,octa-cis-undecaprenyl diphosphate + di-trans,octa-cis-undecaprenyl diphosphate + H(+). It participates in cell wall biogenesis; peptidoglycan biosynthesis. In terms of biological role, peptidoglycan polymerase that is essential for cell division. In Coxiella burnetii (strain RSA 493 / Nine Mile phase I), this protein is Probable peptidoglycan glycosyltransferase FtsW.